We begin with the raw amino-acid sequence, 181 residues long: Peptide deformylase (181 aa).

Fe cation contacts are provided by cysteine 103 and histidine 145. Glutamate 146 is a catalytic residue. Histidine 149 serves as a coordination point for Fe cation.

This sequence belongs to the polypeptide deformylase family. Fe(2+) is required as a cofactor.

It catalyses the reaction N-terminal N-formyl-L-methionyl-[peptide] + H2O = N-terminal L-methionyl-[peptide] + formate. Its function is as follows. Removes the formyl group from the N-terminal Met of newly synthesized proteins. Requires at least a dipeptide for an efficient rate of reaction. N-terminal L-methionine is a prerequisite for activity but the enzyme has broad specificity at other positions. The polypeptide is Peptide deformylase (Orientia tsutsugamushi (strain Boryong) (Rickettsia tsutsugamushi)).